A 315-amino-acid polypeptide reads, in one-letter code: Protoheme IX farnesyltransferase (315 aa).

The next 9 membrane-spanning stretches (helical) occupy residues 21–41 (YFAL…LVGL), 52–74 (VGFC…NMWW), 98–118 (GEAL…LALA), 121–141 (LLAA…YSMW), 150–170 (IVIG…AATG), 177–197 (VLMF…LALF), 223–243 (ILVY…TPVA), 246–266 (LYLA…WDIW), and 284–304 (FFKF…AEAI).

This sequence belongs to the UbiA prenyltransferase family. Protoheme IX farnesyltransferase subfamily. Interacts with CtaA.

The protein resides in the cell inner membrane. It catalyses the reaction heme b + (2E,6E)-farnesyl diphosphate + H2O = Fe(II)-heme o + diphosphate. The protein operates within porphyrin-containing compound metabolism; heme O biosynthesis; heme O from protoheme: step 1/1. Converts heme B (protoheme IX) to heme O by substitution of the vinyl group on carbon 2 of heme B porphyrin ring with a hydroxyethyl farnesyl side group. In Dinoroseobacter shibae (strain DSM 16493 / NCIMB 14021 / DFL 12), this protein is Protoheme IX farnesyltransferase.